The following is a 266-amino-acid chain: Phage-like element PBSX protein XkdC (266 aa).

124 to 131 (GQPGSGKT) is a binding site for ATP.

To B.subtilis YqaM.

In terms of biological role, may function as a transcriptional antiterminator. The chain is Phage-like element PBSX protein XkdC (xkdC) from Bacillus subtilis (strain 168).